We begin with the raw amino-acid sequence, 548 residues long: Probable zinc metalloprotease EGY1, chloroplastic (548 aa).

The transit peptide at 1–18 (MGTLTSVAFAAAVNIRFR) directs the protein to the chloroplast. Residues 61–76 (NSNRDDSIGENGETHK) are compositionally biased toward basic and acidic residues. Residues 61–116 (NSNRDDSIGENGETHKSSVVKTATFEEEDEETSKSSSTTSSSNEFGSDKTSMPSTI) form a disordered region. The segment covering 103-116 (NEFGSDKTSMPSTI) has biased composition (polar residues). 8 helical membrane-spanning segments follow: residues 242-262 (YVIA…LGIA), 290-310 (LYPF…ILLF), 326-346 (LSIP…ITQF), 361-381 (LAGP…GLFL), 388-408 (ANDL…LGLI), 416-436 (AALH…WCGL), 474-494 (MLGL…YVLI), and 516-536 (ALVG…WDEL).

It belongs to the peptidase M50B family. As to expression, expressed in roots, leaves, cotyledons, hypocotyls, stems, flowers and siliques.

The protein localises to the plastid. It localises to the chloroplast membrane. In terms of biological role, membrane-associated and ATP-independent metalloprotease required for development of both thylakoid grana and well-organized lamellae in chloroplast. Required for the accumulation of chlorophyll and chlorophyll a/b binding (CAB) proteins (from both PS I and PS II) in chloroplast membranes, and for grana formation and normal chloroplast development. Involved in the regulation of nuclear gene expression in response to ammonium stress and interacts with ABA signaling. Carries out beta-casein degradation in an ATP-independent manner in vitro. In Arabidopsis thaliana (Mouse-ear cress), this protein is Probable zinc metalloprotease EGY1, chloroplastic (EGY1).